The chain runs to 654 residues: DNA-directed RNA polymerase III subunit RPC3 (654 aa).

Phosphothreonine is present on T27. Disordered regions lie at residues 381–401 (LSRK…ASLP) and 422–448 (KSLQ…EDPH). 2 positions are modified to phosphoserine: S392 and S394. Residues 429-444 (DTQEEDEEEEDLDADT) show a composition bias toward acidic residues. The segment at 581-602 (LEWNMANLLFKKEKLKQENSTL) is leucine-zipper.

Belongs to the eukaryotic RPC3/POLR3C RNA polymerase subunit family. In terms of assembly, component of the RNA polymerase III (Pol III) complex consisting of 17 subunits.

It localises to the cytoplasm. The protein resides in the nucleus. Its function is as follows. DNA-dependent RNA polymerase catalyzes the transcription of DNA into RNA using the four ribonucleoside triphosphates as substrates. Specific core component of RNA polymerase III which synthesizes small RNAs, such as 5S rRNA and tRNAs. This Saccharomyces cerevisiae (strain ATCC 204508 / S288c) (Baker's yeast) protein is DNA-directed RNA polymerase III subunit RPC3 (RPC82).